The chain runs to 481 residues: Glutamate--cysteine ligase (481 aa).

It belongs to the glutamate--cysteine ligase type 1 family. Type 1 subfamily.

It catalyses the reaction L-cysteine + L-glutamate + ATP = gamma-L-glutamyl-L-cysteine + ADP + phosphate + H(+). It functions in the pathway sulfur metabolism; glutathione biosynthesis; glutathione from L-cysteine and L-glutamate: step 1/2. This chain is Glutamate--cysteine ligase, found in Clostridium acetobutylicum (strain ATCC 824 / DSM 792 / JCM 1419 / IAM 19013 / LMG 5710 / NBRC 13948 / NRRL B-527 / VKM B-1787 / 2291 / W).